We begin with the raw amino-acid sequence, 94 residues long: PqqA binding protein (94 aa).

It belongs to the PqqD family. In terms of assembly, monomer. Interacts with PqqE.

The protein operates within cofactor biosynthesis; pyrroloquinoline quinone biosynthesis. Functionally, functions as a PqqA binding protein and presents PqqA to PqqE, in the pyrroloquinoline quinone (PQQ) biosynthetic pathway. The protein is PqqA binding protein of Acinetobacter baumannii (strain SDF).